A 427-amino-acid polypeptide reads, in one-letter code: Glutamate-1-semialdehyde 2,1-aminomutase (427 aa).

Lys268 carries the N6-(pyridoxal phosphate)lysine modification.

The protein belongs to the class-III pyridoxal-phosphate-dependent aminotransferase family. HemL subfamily. The cofactor is pyridoxal 5'-phosphate.

It localises to the cytoplasm. The catalysed reaction is (S)-4-amino-5-oxopentanoate = 5-aminolevulinate. It functions in the pathway porphyrin-containing compound metabolism; protoporphyrin-IX biosynthesis; 5-aminolevulinate from L-glutamyl-tRNA(Glu): step 2/2. In Methanococcus maripaludis (strain C7 / ATCC BAA-1331), this protein is Glutamate-1-semialdehyde 2,1-aminomutase.